The primary structure comprises 470 residues: Probable V-type proton ATPase subunit H 2 (470 aa).

This sequence belongs to the V-ATPase H subunit family. V-ATPase is a heteromultimeric enzyme made up of two complexes: the ATP-hydrolytic V1 complex and the proton translocation V0 complex. The V1 complex consists of three catalytic AB heterodimers that form a heterohexamer, three peripheral stalks each consisting of EG heterodimers, one central rotor including subunits D and F, and the regulatory subunits C and H. The proton translocation complex V0 consists of the proton transport subunit a, a ring of proteolipid subunits c9c'', rotary subunit d, subunits e and f, and the accessory subunits vah-19/Ac45 and vah-20/PRR.

Subunit of the V1 complex of vacuolar(H+)-ATPase (V-ATPase), a multisubunit enzyme composed of a peripheral complex (V1) that hydrolyzes ATP and a membrane integral complex (V0) that translocates protons. V-ATPase is responsible for acidifying and maintaining the pH of intracellular compartments and in some cell types, is targeted to the plasma membrane, where it is responsible for acidifying the extracellular environment. Subunit H is essential for V-ATPase activity, but not for the assembly of the complex. This Caenorhabditis elegans protein is Probable V-type proton ATPase subunit H 2.